The chain runs to 70 residues: MKTQFVILLVALVLFQMFAQSEAIFSAIGGFLKSIFGKRGLQDLDMDDLDQLFDGEISQADINFLNQLMR.

A signal peptide spans 1–23 (MKTQFVILLVALVLFQMFAQSEA). Phenylalanine 36 bears the Phenylalanine amide mark. Residues 40 to 70 (GLQDLDMDDLDQLFDGEISQADINFLNQLMR) constitute a propeptide that is removed on maturation.

This sequence belongs to the non-disulfide-bridged peptide (NDBP) superfamily. Short antimicrobial peptide (group 4) family. As to expression, expressed by the venom gland.

The protein resides in the secreted. It is found in the target cell membrane. In terms of biological role, amphipathic peptide with antimicrobial activity. The sequence is that of Peptide Hp1035 from Heterometrus petersii (Asian forest scorpion).